The sequence spans 408 residues: Phosphoglycerate kinase (408 aa).

Substrate contacts are provided by residues 28–30 (DIN), R43, 66–69 (HQGR), R123, and R163. Residues E334 and 358–361 (GGHT) contribute to the ATP site.

It belongs to the phosphoglycerate kinase family. As to quaternary structure, monomer.

Its subcellular location is the cytoplasm. The enzyme catalyses (2R)-3-phosphoglycerate + ATP = (2R)-3-phospho-glyceroyl phosphate + ADP. Its pathway is carbohydrate degradation; glycolysis; pyruvate from D-glyceraldehyde 3-phosphate: step 2/5. The sequence is that of Phosphoglycerate kinase from Pyrobaculum aerophilum (strain ATCC 51768 / DSM 7523 / JCM 9630 / CIP 104966 / NBRC 100827 / IM2).